Here is a 976-residue protein sequence, read N- to C-terminus: 5'-3' exoribonuclease 2 homolog (976 aa).

A CCHC-type zinc finger spans residues 264-281 (RACELCGQYGHELKECRG). Basic and acidic residues predominate over residues 411–420 (DEERFKENQK). The segment at 411 to 442 (DEERFKENQKNKKARMQQYGRGRGGRGRGRGQ) is disordered. Residues 535–788 (DIRLYESGWK…GICVLYEDPE (254 aa)) are interaction with paxt-1. The tract at residues 815–976 (WNERRDGRFN…GGYQGNSSWR (162 aa)) is disordered. The segment covering 856–866 (DRQGGNDNYRG) has biased composition (low complexity).

It belongs to the 5'-3' exonuclease family. XRN2/RAT1 subfamily. As to quaternary structure, interacts with paxt-1 (via N-terminus); the interaction is direct and results in stabilization of xrn-2 in the complex.

The protein localises to the nucleus. Possesses 5'-&gt;3' exoribonuclease activity. Plays a role in maintenance of steady-state concentration and turnover of microRNAs (miRNA) by degradation of mature miRNA. Degradation role is enhanced when in complex with paxt-1. Partially redundant to xrn-1 in miRNA guide strand degradation. Implicated in differential regulation of mRNAs such as let-7 by controlling the accumulation of mature miRNA. Positively regulates molting of the pharyngeal cuticle. In Caenorhabditis briggsae, this protein is 5'-3' exoribonuclease 2 homolog.